The primary structure comprises 976 residues: Chitin synthase 3A (976 aa).

Positions 29-72 (DDANASNRSPVSNPYEPDYDQLSPPPMLGAQRPVPEQNESSRDL) are disordered. The span at 31–40 (ANASNRSPVS) shows a compositional bias: polar residues. Residues asparagine 32, asparagine 66, asparagine 95, and asparagine 602 are each glycosylated (N-linked (GlcNAc...) asparagine). 7 helical membrane-spanning segments follow: residues 639-659 (LLNV…TTII), 684-704 (IVNV…FVLA), 717-737 (VLSF…TGYL), 773-793 (LIII…FLYL), 801-821 (SFPQ…VYAF), 903-923 (TGLV…VTTD), and 944-964 (FLLY…LWFI).

It belongs to the chitin synthase family. Class III subfamily.

The protein resides in the cell membrane. The enzyme catalyses [(1-&gt;4)-N-acetyl-beta-D-glucosaminyl](n) + UDP-N-acetyl-alpha-D-glucosamine = [(1-&gt;4)-N-acetyl-beta-D-glucosaminyl](n+1) + UDP + H(+). Functionally, polymerizes chitin, a structural polymer of the cell wall and septum, by transferring the sugar moiety of UDP-GlcNAc to the non-reducing end of the growing chitin polymer. Shows additive effects in septum formation with CHS1, CHS2, CHS4, CHS5, CHS6 and CHS7. Involved in virulence and mediates mycotoxin deoxinivalenol (DON) biosynthesis via the regulation of the expression of TRI4, TRI5 and TRI6. The polypeptide is Chitin synthase 3A (Gibberella zeae (strain ATCC MYA-4620 / CBS 123657 / FGSC 9075 / NRRL 31084 / PH-1) (Wheat head blight fungus)).